We begin with the raw amino-acid sequence, 199 residues long: Probable GTP-binding protein EngB (199 aa).

The region spanning 28–199 (DLPEIALAGR…DSWDAILEQV (172 aa)) is the EngB-type G domain. Residues 36–43 (GRSNVGKS), 63–67 (GKTQL), 81–84 (DVPG), 148–151 (TKAD), and 180–182 (FSS) contribute to the GTP site. Ser43 and Thr65 together coordinate Mg(2+).

The protein belongs to the TRAFAC class TrmE-Era-EngA-EngB-Septin-like GTPase superfamily. EngB GTPase family. Mg(2+) is required as a cofactor.

Necessary for normal cell division and for the maintenance of normal septation. This is Probable GTP-binding protein EngB from Streptococcus pyogenes serotype M49 (strain NZ131).